The chain runs to 415 residues: Hepatocyte nuclear factor 3-beta (415 aa).

Positions 150–244 form a DNA-binding region, fork-head; that stretch reads KPPYSYISLI…ENGCYLRRQK (95 aa). The span at 251–262 shows a compositional bias: basic and acidic residues; that stretch reads KMSMKEPGRKGG. The interval 251–324 is disordered; sequence KMSMKEPGRK…GQHLMSQHHS (74 aa). Low complexity predominate over residues 266–277; it reads SANSSSDSCNGN. Residues 310–323 show a composition bias toward polar residues; that stretch reads SPVSQGQHLMSQHH.

The protein localises to the nucleus. Its function is as follows. Transcription activator for a number of liver genes. Interacts with the cis-acting regulatory regions of these genes. The chain is Hepatocyte nuclear factor 3-beta (foxa2) from Oryzias latipes (Japanese rice fish).